Reading from the N-terminus, the 228-residue chain is Probable septum site-determining protein MinC (228 aa).

It belongs to the MinC family. Interacts with MinD and FtsZ.

Cell division inhibitor that blocks the formation of polar Z ring septums. Rapidly oscillates between the poles of the cell to destabilize FtsZ filaments that have formed before they mature into polar Z rings. Prevents FtsZ polymerization. This chain is Probable septum site-determining protein MinC, found in Pectobacterium carotovorum subsp. carotovorum (strain PC1).